The chain runs to 264 residues: General transcription factor IIF subunit 2 (264 aa).

The protein belongs to the TFIIF beta subunit family. As to quaternary structure, heterodimer of an alpha and a beta subunit.

The protein localises to the nucleus. TFIIF is a general transcription initiation factor that binds to RNA polymerase II and helps to recruit it to the initiation complex in collaboration with TFIIB. The protein is General transcription factor IIF subunit 2 (gtf2f2) of Xenopus laevis (African clawed frog).